The chain runs to 173 residues: Inorganic pyrophosphatase (173 aa).

Residues lysine 29, arginine 43, and tyrosine 55 each contribute to the substrate site. The Mg(2+) site is built by aspartate 65, aspartate 70, and aspartate 102. Tyrosine 141 provides a ligand contact to substrate.

The protein belongs to the PPase family. As to quaternary structure, homohexamer. It depends on Mg(2+) as a cofactor.

It localises to the cytoplasm. The enzyme catalyses diphosphate + H2O = 2 phosphate + H(+). Functionally, catalyzes the hydrolysis of inorganic pyrophosphate (PPi) forming two phosphate ions. This is Inorganic pyrophosphatase from Rickettsia felis (strain ATCC VR-1525 / URRWXCal2) (Rickettsia azadi).